Reading from the N-terminus, the 201-residue chain is Glycerol-3-phosphate acyltransferase (201 aa).

The next 6 membrane-spanning stretches (helical) occupy residues 10–30 (MLIGALIFGYVLGSIPFGLIL), 60–80 (LAAATLILDALKGTAAALIAA), 86–106 (AAIAAGFGAFIGHLFPVWIGF), 116–136 (LGVLIGLAWAGALVFAAAWIV), 139–159 (LLTRYSSLSALVASLVVPIAL), and 166–186 (ALAALFAIMTVIVFIKHRANI).

The protein belongs to the PlsY family. As to quaternary structure, probably interacts with PlsX.

It localises to the cell inner membrane. The catalysed reaction is an acyl phosphate + sn-glycerol 3-phosphate = a 1-acyl-sn-glycero-3-phosphate + phosphate. Its pathway is lipid metabolism; phospholipid metabolism. Its function is as follows. Catalyzes the transfer of an acyl group from acyl-phosphate (acyl-PO(4)) to glycerol-3-phosphate (G3P) to form lysophosphatidic acid (LPA). This enzyme utilizes acyl-phosphate as fatty acyl donor, but not acyl-CoA or acyl-ACP. This is Glycerol-3-phosphate acyltransferase from Brucella suis (strain ATCC 23445 / NCTC 10510).